Here is a 1489-residue protein sequence, read N- to C-terminus: FERM domain-containing protein C (1489 aa).

Composition is skewed to polar residues over residues 59–79 (DTESNYGGGANSITNTPNFNS) and 103–118 (NSPLHKSATRPISTSI). 4 disordered regions span residues 59–86 (DTESNYGGGANSITNTPNFNSHRGHQHL), 103–197 (NSPL…PSTL), 252–271 (NSVQNDIVDSDNNNNNNNNN), and 277–312 (EQQQEKQQQQQQHHHHHSTPNKPPKSRSVSISTPDS). Positions 131–153 (SSSSSSSDGDSNSSSDSSDNSSE) are enriched in low complexity. Residues 163–172 (HLHLHRHHRK) are compositionally biased toward basic residues. Residues 181–195 (FESSSESSEQYGSPS) show a composition bias toward low complexity. The stretch at 202–289 (ALKLEKIMQI…QEKQQQQQQH (88 aa)) forms a coiled coil. Over residues 277-287 (EQQQEKQQQQQ) the composition is skewed to low complexity. Residues 303 to 312 (RSVSISTPDS) show a composition bias toward polar residues. The stretch at 356–383 (IKVSKVLEEEMQLQQEFEKQEQLRHSAR) forms a coiled coil. 3 disordered regions span residues 396–435 (NLQDQQDQQLRKNENSNNNEGDDNNENVSNDNSSDNENQN), 459–479 (VITPPPPAQEPQHQQQPKILT), and 508–569 (EDPL…TTTT). Residues 421–435 (ENVSNDNSSDNENQN) show a composition bias toward low complexity. Residues 545-555 (TASSSSSPTLQ) show a composition bias toward polar residues. The segment covering 556–569 (ATKTTTTTTTTTTT) has biased composition (low complexity). The FERM domain maps to 637 to 934 (ILVHISLVDQ…GYKYFIQHDE (298 aa)). LRR repeat units follow at residues 1017–1040 (KVELPSLNLRGSDLSFIADALKDT), 1053–1075 (ENLNILSLDLSNNPLLATDAFEP), 1087–1110 (HLNLKNIGLSNKGVMPLVTIIEKY), 1111–1133 (PNIETLQIGKNRVNESGVRVILR), 1167–1191 (NKTIKNLNISKNLITEEGFHHIFEG), 1196–1219 (SLSLQDLNISGNKINSKLMIKFIK), 1254–1278 (SCHIKSLDTSYNDLGTSGTKNVIKG), 1282–1306 (NQTITELSLCANKISSSGCNDLCQS), 1339–1362 (NKTITTLDLSMNEFSKSSSSAIGT), 1367–1391 (NETLQEFYLADSSLGAREVESILNG), 1395–1418 (NSTIKKIFLDTNPIGKKGISSLAN), 1428–1450 (VITLRHTNLNGKDILELLKQLST), and 1451–1474 (NIPIKIINLTENTLDKITPQIKNA).

This is FERM domain-containing protein C (frmC) from Dictyostelium discoideum (Social amoeba).